Consider the following 975-residue polypeptide: Homeobox protein cut-like 1 (975 aa).

Residues 1–73 (SRQVKEQLIK…ILALRSIQGR (73 aa)) constitute a DNA-binding region (CUT 1). Disordered regions lie at residues 90-113 (PKRR…GSDE) and 126-148 (LQVQ…TSDD). Residues 113–169 (EAIKSILEQAKRELQVQKTAEPAQPSSTSSSGTSDDAIRSILQQARREMEAQQAALD) adopt a coiled-coil conformation. Serine 207 is modified (phosphoserine). Positions 209-246 (KKPPTAPDTSASTLPNPPALKKESQDAPGLDLPGAAES) are disordered. Residues lysine 229, lysine 255, and lysine 286 each participate in a glycyl lysine isopeptide (Lys-Gly) (interchain with G-Cter in SUMO2) cross-link. The segment covering 262-297 (GVWKDHWWSTVQPERKSAAPPEDAKSEEAGGTKEKG) has biased composition (basic and acidic residues). The segment at 262–369 (GVWKDHWWST…SKPAKPSVPP (108 aa)) is disordered. Positions 328-351 (RTPQSSELSLTGASRSETPQNSPL) are enriched in polar residues. A Phosphoserine modification is found at serine 349. The segment at residues 374 to 461 (QYEIYMYQEV…QGVLPVQGQQ (88 aa)) is a DNA-binding region (CUT 2). Polar residues predominate over residues 476-489 (LQQGCVSSESTPKT). The disordered stretch occupies residues 476-549 (LQQGCVSSES…SQPATPLPLS (74 aa)). Over residues 490–506 (SASCSPAPESPMSSSES) the composition is skewed to low complexity. Phosphoserine occurs at positions 499 and 509. Positions 557–644 (QELVAMSPEL…VEKLMDMKRM (88 aa)) form a DNA-binding region, CUT 3. The disordered stretch occupies residues 652–687 (RRHSSVSDSQPCEPPSVGIDYSQGASPQPQHQLKKP). Residues 684 to 743 (LKKPRVVLAPEEKEALKRAYQQKPYPSPKTIEELATQLNLKTSTVINWFHNYRSRIRREL) constitute a DNA-binding region (homeobox). Serine 710 is modified (phosphoserine). Lysine 724 participates in a covalent cross-link: Glycyl lysine isopeptide (Lys-Gly) (interchain with G-Cter in SUMO2). A disordered region spans residues 752–949 (SQGQAGARHS…DSRDNPLRKK (198 aa)). The segment covering 756 to 773 (AGARHSPSARSSGAAPSS) has biased composition (low complexity). The residue at position 777 (serine 777) is a Phosphoserine. Residues 780 to 813 (GVEAAEGPGAADAEESAPAAAAKSQGGPAEAAVA) are compositionally biased toward low complexity. Gly residues predominate over residues 838 to 847 (PGRRGGGGPA). Positions 850 to 860 (APAAPAAAARG) are enriched in low complexity. Positions 861–890 (PSRRPGARAKPRRRRRRRRRHARGGGRRYL) are enriched in basic residues. The segment covering 907–929 (RSSALPSTSAPAAARRPSSLQSL) has biased composition (low complexity). Residue serine 925 is modified to Phosphoserine. A compositionally biased stretch (basic and acidic residues) spans 937–946 (GARDSRDNPL). Phosphoserine is present on residues serine 956 and serine 966.

The protein belongs to the CUT homeobox family. As to quaternary structure, interacts with BANP. As cells progress into S phase, a fraction of CUX1 molecules is proteolytically processed into N-terminally truncated proteins of 110 kDa by CTSL. Cell cycle-dependent processing of CUX1 serves to generate a CDP/Cux p110 with distinct DNA binding and transcriptional properties. Post-translationally, phosphorylated by PKA. A broad pattern of expression observed in tissues of diverse origins, such as cartilage, liver, brain, lung, heart and skeletal muscle. There are 2 distinct protein species: the larger one (230-250 kDa) is found mainly in adult brain, lung and heart, and the smaller one (180-190 kDa) predominates in early embryonic tissues.

The protein localises to the nucleus. Transcription factor involved in the control of neuronal differentiation in the brain. Regulates dendrite development and branching, and dendritic spine formation in cortical layers II-III. Also involved in the control of synaptogenesis. In addition, it has probably a broad role in mammalian development as a repressor of developmentally regulated gene expression. May act by preventing binding of positively-activing CCAAT factors to promoters. Component of nf-munr repressor; binds to the matrix attachment regions (MARs) (5' and 3') of the immunoglobulin heavy chain enhancer. Represses T-cell receptor (TCR) beta enhancer function by binding to MARbeta, an ATC-rich DNA sequence located upstream of the TCR beta enhancer. Binds to the TH enhancer; may require the basic helix-loop-helix protein TCF4 as a coactivator. Its function is as follows. Plays a role in cell cycle progression, in particular at the G1/S transition. As cells progress into S phase, a fraction of CUX1 molecules is proteolytically processed into N-terminally truncated proteins of 110 kDa. While CUX1 only transiently binds to DNA and carries the CCAAT-displacement activity, CDP/Cux p110 makes a stable interaction with DNA and stimulates expression of genes such as POLA1. This Canis lupus familiaris (Dog) protein is Homeobox protein cut-like 1 (CUX1).